Consider the following 724-residue polypeptide: Catalase-peroxidase (724 aa).

The segment at residues 98–226 (WHSAGSYRLA…LAAVQMGLIY (129 aa)) is a cross-link (tryptophyl-tyrosyl-methioninium (Trp-Tyr) (with M-252)). Residue His99 is the Proton acceptor of the active site. The segment at residues 226–252 (YVNPEGVNGKPDPLKTAAQVRTTFARM) is a cross-link (tryptophyl-tyrosyl-methioninium (Tyr-Met) (with W-98)). Residue His267 participates in heme b binding.

This sequence belongs to the peroxidase family. Peroxidase/catalase subfamily. As to quaternary structure, homodimer or homotetramer. Requires heme b as cofactor. Post-translationally, formation of the three residue Trp-Tyr-Met cross-link is important for the catalase, but not the peroxidase activity of the enzyme.

It catalyses the reaction H2O2 + AH2 = A + 2 H2O. The catalysed reaction is 2 H2O2 = O2 + 2 H2O. Bifunctional enzyme with both catalase and broad-spectrum peroxidase activity. The polypeptide is Catalase-peroxidase (Maricaulis maris (strain MCS10) (Caulobacter maris)).